The sequence spans 874 residues: DNA mismatch repair protein MutS (874 aa).

An ATP-binding site is contributed by 613-620 (GPNMGGKS). The segment at 799–820 (EAGSTPSPAPVSVNEPKPAAPT) is disordered.

Belongs to the DNA mismatch repair MutS family.

Its function is as follows. This protein is involved in the repair of mismatches in DNA. It is possible that it carries out the mismatch recognition step. This protein has a weak ATPase activity. The chain is DNA mismatch repair protein MutS from Marinobacter nauticus (strain ATCC 700491 / DSM 11845 / VT8) (Marinobacter aquaeolei).